Here is a 391-residue protein sequence, read N- to C-terminus: MSYLSIRDLDLKGKRVFIRVDFNVPLQKNDQGAMEITSDKRIKASLPTIQYALEHGAAVILASHLGRPKGKPNTEMSLKPVAARLEQVLKVPVKMAPDCVGPEVQAMLPAPGEVLLLENLRFHAEEEKNDPAFAAQLAALCEIYVNDAFGSAHRAHASTEGMVKLVKQAAAGLLMEKELKYLGMATTNPPRPCVAILGGAKVSDKIEVIQNLGKVVDRLLIGGAMAYTFLKAQGLPTGKSLVEDDKVELAKSLLAELGERLMLPVDHVVVSEIAAGAPFEVVDTIPEGKIAVDIGPKTVEAFSKVVAGAKTVIWNGPMGIFEKPPFDQGTVAVAKAVAGSGATSIVGGGDSEKAIKAAGVSDKISHVSTGGGASLEFLAGDTLPGVAALDR.

Substrate-binding positions include 21-23 (DFN), Arg41, 64-67 (HLGR), Arg121, and Arg154. Residues Lys205, Glu322, and 348-351 (GGDS) contribute to the ATP site.

Belongs to the phosphoglycerate kinase family. Monomer.

Its subcellular location is the cytoplasm. It catalyses the reaction (2R)-3-phosphoglycerate + ATP = (2R)-3-phospho-glyceroyl phosphate + ADP. Its pathway is carbohydrate degradation; glycolysis; pyruvate from D-glyceraldehyde 3-phosphate: step 2/5. This Solibacter usitatus (strain Ellin6076) protein is Phosphoglycerate kinase.